The primary structure comprises 282 residues: Aquaporin PIP-type (282 aa).

2 helical membrane-spanning segments follow: residues 39–61 (WRAAIAEFIATLLFLYITVATVI) and 74–96 (GLLGIAWSFGGMIFVLVYCTAGI). The NPA 1 motif lies at 102-104 (NPA). 4 helical membrane passes run 116–138 (SLLRALVYMIAQCAGAICGVGLV), 159–181 (GYNKGTAFGAELIGTFVLVYTVF), 201–223 (LPIGFAVFMVHLATIPITGTGIN), and 243–265 (HWIFWVGPFVGALAAAAYHQYVL). Positions 223–225 (NPA) match the NPA 2 motif.

It belongs to the MIP/aquaporin (TC 1.A.8) family. PIP (TC 1.A.8.11) subfamily.

The protein localises to the membrane. Its function is as follows. Water-specific channel. The sequence is that of Aquaporin PIP-type from Atriplex canescens (Fourwing saltbush).